Reading from the N-terminus, the 149-residue chain is Probable calcium-binding protein CML25/26 (149 aa).

4 EF-hand domains span residues methionine 1–glutamate 35, valine 37–glutamine 72, glutamate 77–glutamate 113, and leucine 117–alanine 149. Residues aspartate 13, aspartate 15, aspartate 17, lysine 19, glutamate 24, aspartate 50, aspartate 52, aspartate 54, and glutamate 61 each contribute to the Ca(2+) site. The Ca(2+) site is built by aspartate 130, asparagine 132, aspartate 134, and glutamate 141.

Functionally, potential calcium sensor. The polypeptide is Probable calcium-binding protein CML25/26 (CML25) (Oryza sativa subsp. japonica (Rice)).